The chain runs to 57 residues: Small ribosomal subunit protein bS21 (57 aa).

Residues Gln-22 to Lys-57 form a disordered region. The span at Lys-33–Lys-57 shows a compositional bias: basic residues.

The protein belongs to the bacterial ribosomal protein bS21 family.

In Natranaerobius thermophilus (strain ATCC BAA-1301 / DSM 18059 / JW/NM-WN-LF), this protein is Small ribosomal subunit protein bS21.